A 92-amino-acid polypeptide reads, in one-letter code: Small ribosomal subunit protein bS20 (92 aa).

The disordered stretch occupies residues methionine 1–arginine 25.

Belongs to the bacterial ribosomal protein bS20 family.

Binds directly to 16S ribosomal RNA. In Paraburkholderia phymatum (strain DSM 17167 / CIP 108236 / LMG 21445 / STM815) (Burkholderia phymatum), this protein is Small ribosomal subunit protein bS20.